The primary structure comprises 380 residues: Alcohol dehydrogenase 2 (380 aa).

The Zn(2+) site is built by C48, T50, H70, C100, C103, C106, C114, and C178. Residues T50 and H70 each coordinate an alcohol. An NAD(+)-binding site is contributed by T50. Residues 203 to 208 (GLGAVG), D227, R232, T273, V296, 296 to 298 (VGV), F323, and R373 contribute to the NAD(+) site.

Belongs to the zinc-containing alcohol dehydrogenase family. As to quaternary structure, homodimer. Homotetramer. The cofactor is Zn(2+).

It is found in the cytoplasm. It catalyses the reaction a primary alcohol + NAD(+) = an aldehyde + NADH + H(+). The catalysed reaction is a secondary alcohol + NAD(+) = a ketone + NADH + H(+). This Solanum lycopersicum (Tomato) protein is Alcohol dehydrogenase 2 (ADH2).